The chain runs to 603 residues: Zinc finger protein 415 (603 aa).

Residues 264–286 (YRYIECDKALNHGSHMTVRQVSH) form a C2H2-type 1; degenerate zinc finger. C2H2-type zinc fingers lie at residues 292 to 314 (YKCD…WRVH), 320 to 342 (YKCN…RRVH), 348 to 370 (YKCY…QKTH), 376 to 398 (YTCK…QVIH), 404 to 426 (YKCN…QRIH), 432 to 454 (YKCN…WRIH), 460 to 482 (YKCN…RRVH), 488 to 510 (YKCN…QVIH), 516 to 538 (YKCN…QVIH), 544 to 566 (YKCN…QIIH), and 572 to 594 (YKCS…QIIH).

In terms of tissue distribution, expressed in all tissues examined. Isoforms are differentially expressed. Isoform 3 and isoform 5 were highly expressed, isoform 4 moderately expressed, isoform 2 lower expression, the lowest expression level was seem with isoform 1.

It is found in the nucleus. It localises to the cytoplasm. In terms of biological role, involved in transcriptional regulation. Transcriptional activity differed among the various isoforms. All isoforms except isoform 3 seem to suppresses the transcriptional activities of AP-1 and p53/TP53. The protein is Zinc finger protein 415 (ZNF415) of Homo sapiens (Human).